Reading from the N-terminus, the 102-residue chain is Large ribosomal subunit protein uL24 (102 aa).

The protein belongs to the universal ribosomal protein uL24 family. In terms of assembly, part of the 50S ribosomal subunit.

One of two assembly initiator proteins, it binds directly to the 5'-end of the 23S rRNA, where it nucleates assembly of the 50S subunit. Its function is as follows. One of the proteins that surrounds the polypeptide exit tunnel on the outside of the subunit. The sequence is that of Large ribosomal subunit protein uL24 from Paraburkholderia xenovorans (strain LB400).